Consider the following 190-residue polypeptide: Hypoxanthine/guanine phosphoribosyltransferase (190 aa).

The protein belongs to the purine/pyrimidine phosphoribosyltransferase family. Archaeal HPRT subfamily. Homodimer.

The protein resides in the cytoplasm. It carries out the reaction IMP + diphosphate = hypoxanthine + 5-phospho-alpha-D-ribose 1-diphosphate. The enzyme catalyses GMP + diphosphate = guanine + 5-phospho-alpha-D-ribose 1-diphosphate. Its pathway is purine metabolism; IMP biosynthesis via salvage pathway; IMP from hypoxanthine: step 1/1. Catalyzes a salvage reaction resulting in the formation of IMP that is energically less costly than de novo synthesis. This Methanosalsum zhilinae (strain DSM 4017 / NBRC 107636 / OCM 62 / WeN5) (Methanohalophilus zhilinae) protein is Hypoxanthine/guanine phosphoribosyltransferase.